Here is a 243-residue protein sequence, read N- to C-terminus: Venom nerve growth factor 5 (243 aa).

A signal peptide spans 1–18; sequence MSMLCYTLIIAFLIGIWA. The propeptide occupies 19–125; sequence APKSEDNVPL…TLNRNIRTKR (107 aa). The span at 47-66 shows a compositional bias: basic and acidic residues; that stretch reads GLKTSRNTDQRHPAPKKAED. The tract at residues 47–67 is disordered; the sequence is GLKTSRNTDQRHPAPKKAEDQ. 3 disulfide bridges follow: C139–C204, C182–C232, and C192–C234. An N-linked (GlcNAc...) asparagine glycan is attached at N148.

This sequence belongs to the NGF-beta family. In terms of assembly, homodimer; non-covalently linked. Expressed by the venom gland.

It localises to the secreted. Its function is as follows. Nerve growth factor is important for the development and maintenance of the sympathetic and sensory nervous systems. It stimulates division and differentiation of sympathetic and embryonic sensory neurons as well as basal forebrain cholinergic neurons in the brain. Its relevance in the snake venom is not clear. However, it has been shown to inhibit metalloproteinase-dependent proteolysis of platelet glycoprotein Ib alpha, suggesting a metalloproteinase inhibition to prevent metalloprotease autodigestion and/or protection against prey proteases. Binds a lipid between the two protein chains in the homodimer. The lipid-bound form promotes histamine relase from mouse mast cells, contrary to the lipid-free form. This is Venom nerve growth factor 5 from Tropidechis carinatus (Australian rough-scaled snake).